The following is a 181-amino-acid chain: Epidermin decarboxylase (181 aa).

The active site involves His-67.

It belongs to the HFCD (homooligomeric flavin containing Cys decarboxylase) superfamily. In terms of assembly, homododecamer. FMN serves as cofactor.

In terms of biological role, catalyzes the removal of two reducing equivalents (oxidative decarboxylation) from the cysteine residue of the C-terminal meso-lanthionine of epidermin to form a --C==C-- double bond. This is Epidermin decarboxylase (epiD) from Staphylococcus epidermidis.